A 420-amino-acid chain; its full sequence is Mannose-1-phosphate guanylyltransferase regulatory subunit alpha (420 aa).

Positions 2-251 are substrate-binding domain; that stretch reads LKAVILIGGP…DGIWSQIKSA (250 aa). GDP-alpha-D-mannose-binding residues include glutamate 85 and glutamine 247. The hexapeptide repeat domain stretch occupies residues 273–420; that stretch reads LAKHTPGGPR…SRSFTNQIIL (148 aa). The interval 356–384 is C-loop; that stretch reads TPNDPNPNDPRAHMDSESLFKDGKLLPAI.

This sequence belongs to the transferase hexapeptide repeat family. In terms of assembly, component of the GMPPA-GMPPB mannose-1-phosphate guanylyltransferase complex composed of 4 GMPPA subunits and 8 GMPPB subunits; the complex is organized into three layers, a central layer made up of 2 GMPPA dimers sandwiched between two layers each made up of 2 GMPPB dimers. As to expression, expressed in the liver (at protein level).

The protein resides in the cytoplasm. In terms of biological role, regulatory subunit of the GMPPA-GMPPB mannose-1-phosphate guanylyltransferase complex; reduces the catalytic activity of GMPPB when part of the complex. Mediates allosteric feedback inhibition of GMPPB catalytic activity upon binding GDP-alpha-D-mannose. Together with GMPPB regulates GDP-alpha-D-mannose levels. This Sus scrofa (Pig) protein is Mannose-1-phosphate guanylyltransferase regulatory subunit alpha (GMPPA).